Reading from the N-terminus, the 159-residue chain is Globin-like protein (159 aa).

Residues 1-152 (MSMNRQEISD…FNAESQTHLK (152 aa)) enclose the Globin domain. Histidine 101 is a binding site for heme.

Belongs to the globin family. As to quaternary structure, homodimer. Expressed mainly in a subset of neuronal cells and in head muscular tissue.

Its subcellular location is the cytoplasm. Its function is as follows. May be a globin and may play a role in oxygen transport. The chain is Globin-like protein (glb-1) from Caenorhabditis elegans.